The primary structure comprises 593 residues: AT-rich interactive domain-containing protein 3A (593 aa).

Residues 14-222 (QQRARQELEA…PQLQPPDHGD (209 aa)) are disordered. Basic and acidic residues predominate over residues 41–53 (AAPDEDREPESAR). The span at 54-87 (MQRAQMAALAAMRAAAAGLGHPASPGGSEDGPPG) shows a compositional bias: low complexity. A phosphoserine mark is found at S77, S81, and S88. The residue at position 98 (T98) is a Phosphothreonine. 2 positions are modified to phosphoserine: S101 and S119. The segment covering 104–127 (RGREGPGEEHFEDMASDEDMKPKW) has biased composition (basic and acidic residues). Residues 119 to 156 (SDEDMKPKWEEEEMEEDLGEDEEEEEEDYEDEEEEEDE) form an acidic region. A compositionally biased stretch (acidic residues) spans 128-158 (EEEEMEEDLGEDEEEEEEDYEDEEEEEDEEG). One can recognise an ARID domain in the interval 238–330 (DPKRKEFLDD…YLYPYECEKR (93 aa)). A phosphoserine mark is found at S353 and S362. Glycyl lysine isopeptide (Lys-Gly) (interchain with G-Cter in SUMO2) cross-links involve residues K398, K399, K452, and K462. An REKLES domain is found at 444 to 541 (AALEQLREKL…GVLFAQPPAP (98 aa)). An important for nuclear localization region spans residues 445–488 (ALEQLREKLESAEPPEKKMALVADEQQRLMQRALQQNFLAMAAQ). The interval 490–513 (PMSIRINSQASESRQDSAVNLTGT) is homodimerization. Disordered stretches follow at residues 497–516 (SQAS…TNGS) and 539–593 (PAPT…NSLP). Positions 537–557 (QPPAPTPTSAPNKGGGGGGGS) are important for cytoplasmic localization. Residues 549–576 (KGGGGGGGSSSNAGGRGGNTGTSGGQAG) are compositionally biased toward gly residues. Positions 580 to 593 (LSTPSTSTSNNSLP) are enriched in low complexity.

In terms of assembly, homodimer. Heterodimer with ARID3B. Interacts with E2F1. Interacts with GTF2I and BTK. Widely expressed, with highest expression in skeletal muscle, thalamus, and colon.

The protein localises to the nucleus. Its subcellular location is the cytoplasm. In terms of biological role, transcription factor which may be involved in the control of cell cycle progression by the RB1/E2F1 pathway and in B-cell differentiation. In Homo sapiens (Human), this protein is AT-rich interactive domain-containing protein 3A (ARID3A).